A 175-amino-acid polypeptide reads, in one-letter code: uncharacterized protein (175 aa).

This sequence to yeast YER187w.

This is an uncharacterized protein from Saccharomyces cerevisiae (strain ATCC 204508 / S288c) (Baker's yeast).